The following is a 234-amino-acid chain: Phosphoribosylaminoimidazole-succinocarboxamide synthase (234 aa).

Belongs to the SAICAR synthetase family.

It catalyses the reaction 5-amino-1-(5-phospho-D-ribosyl)imidazole-4-carboxylate + L-aspartate + ATP = (2S)-2-[5-amino-1-(5-phospho-beta-D-ribosyl)imidazole-4-carboxamido]succinate + ADP + phosphate + 2 H(+). It functions in the pathway purine metabolism; IMP biosynthesis via de novo pathway; 5-amino-1-(5-phospho-D-ribosyl)imidazole-4-carboxamide from 5-amino-1-(5-phospho-D-ribosyl)imidazole-4-carboxylate: step 1/2. In Clostridium botulinum (strain Okra / Type B1), this protein is Phosphoribosylaminoimidazole-succinocarboxamide synthase.